Consider the following 251-residue polypeptide: Triosephosphate isomerase (251 aa).

Position 9-11 (9-11) interacts with substrate; it reads NWK. The active-site Electrophile is His95. Glu167 (proton acceptor) is an active-site residue. Residues Gly173, Ser213, and 234–235 each bind substrate; that span reads GG. Ser213 carries the post-translational modification Phosphoserine.

This sequence belongs to the triosephosphate isomerase family. Homodimer.

It localises to the cytoplasm. The enzyme catalyses D-glyceraldehyde 3-phosphate = dihydroxyacetone phosphate. Its pathway is carbohydrate biosynthesis; gluconeogenesis. The protein operates within carbohydrate degradation; glycolysis; D-glyceraldehyde 3-phosphate from glycerone phosphate: step 1/1. In terms of biological role, involved in the gluconeogenesis. Catalyzes stereospecifically the conversion of dihydroxyacetone phosphate (DHAP) to D-glyceraldehyde-3-phosphate (G3P). The chain is Triosephosphate isomerase from Bacillus cereus (strain ATCC 10987 / NRS 248).